We begin with the raw amino-acid sequence, 1108 residues long: Retinal guanylyl cyclase 1 (1108 aa).

The first 54 residues, M1–S54, serve as a signal peptide directing secretion. The Extracellular portion of the chain corresponds to A55–E465. C108 and C136 form a disulfide bridge. N-linked (GlcNAc...) asparagine glycosylation occurs at N300. The chain crosses the membrane as a helical span at residues P466–L490. Topologically, residues R491–K1108 are cytoplasmic. The disordered stretch occupies residues G520 to S552. The Protein kinase domain occupies G520–I811. Over residues G529–S552 the composition is skewed to polar residues. Residues T883 to E1013 enclose the Guanylate cyclase domain. The segment at I1069–K1108 is disordered.

Belongs to the adenylyl cyclase class-4/guanylyl cyclase family. In terms of assembly, homodimer; requires homodimerization for guanylyl cyclase activity. Interacts (via C-terminus) with RD3 (via C-terminus); promotes the exit of GUCY2E from the endoplasmic reticulum and its trafficking to the photoreceptor outer segments. Interaction with RD3 negatively regulates GUCY2E guanylate cyclase activity. In terms of processing, there are 9 conserved cysteine residues in sensory guanylate cyclases, 6 in the extracellular domain, which may be involved in intra- or interchain disulfide bonds. In terms of tissue distribution, expressed in retina and enriched in photoreceptor outer segments.

The protein resides in the membrane. It localises to the photoreceptor outer segment membrane. The protein localises to the endoplasmic reticulum membrane. The catalysed reaction is GTP = 3',5'-cyclic GMP + diphosphate. Activated by GUCA1A when free calcium ions concentration is low, and inhibited by GUCA1A when free calcium ions concentration is high. Negatively regulated by RD3; inhibits the basal and GUCA1A-stimulated guanylate cyclase activity. Its function is as follows. Catalyzes the synthesis of cyclic GMP (cGMP) in rods and cones of photoreceptors. Plays an essential role in phototransduction, by mediating cGMP replenishment. May also participate in the trafficking of membrane-asociated proteins to the photoreceptor outer segment membrane. The chain is Retinal guanylyl cyclase 1 (Gucy2e) from Rattus norvegicus (Rat).